A 62-amino-acid polypeptide reads, in one-letter code: Zinc metalloproteinase-disintegrin-like BaG (62 aa).

The Peptidase M12B domain occupies 24–54 (KTDLLNRSHDNAQLSPINLVVAVIMAHEMGH). An N-linked (GlcNAc...) asparagine glycan is attached at N29. Residue H50 participates in Zn(2+) binding. E51 is an active-site residue. H54 serves as a coordination point for Zn(2+).

It belongs to the venom metalloproteinase (M12B) family. P-III subfamily. P-IIIc sub-subfamily. As to quaternary structure, dimer. Zn(2+) serves as cofactor. The N-terminus is blocked. Expressed by the venom gland.

The protein resides in the secreted. Its activity is regulated as follows. Inhibited by EDTA, and 1,10-phenanthroline. Its function is as follows. Snake venom Zinc metalloproteinase that inhibits ADP-induced platelet aggregation and inhibits the alpha-5/beta-1 (ITGA5/ITGB1) integrin, a fibronectin receptor. Has caseinolytic activity. Induces the detachment of cells that are bound to fibronectin. The sequence is that of Zinc metalloproteinase-disintegrin-like BaG from Bothrops alternatus (Urutu).